Reading from the N-terminus, the 283-residue chain is Ribosomal RNA small subunit methyltransferase I (283 aa).

The protein belongs to the methyltransferase superfamily. RsmI family.

The protein localises to the cytoplasm. The catalysed reaction is cytidine(1402) in 16S rRNA + S-adenosyl-L-methionine = 2'-O-methylcytidine(1402) in 16S rRNA + S-adenosyl-L-homocysteine + H(+). Catalyzes the 2'-O-methylation of the ribose of cytidine 1402 (C1402) in 16S rRNA. The sequence is that of Ribosomal RNA small subunit methyltransferase I from Haemophilus influenzae (strain ATCC 51907 / DSM 11121 / KW20 / Rd).